The sequence spans 798 residues: Metabotropic glutamate receptor-like protein A (798 aa).

The signal sequence occupies residues 1-23; sequence MNKLKFLIILFITFLFNLKYINS. Over 24 to 388 the chain is Extracellular; sequence LKQCKISVLL…DYSNSMKLGL (365 aa). N-linked (GlcNAc...) asparagine glycans are attached at residues Asn-186, Asn-275, and Asn-320. Residues 389 to 409 form a helical membrane-spanning segment; sequence TIVSGFCILFCIISMVLVIMF. At 410 to 419 the chain is on the cytoplasmic side; that stretch reads RHAKIIKSAS. Residues 420 to 440 traverse the membrane as a helical segment; that stretch reads PIFCLLILFGCIIIFSGCIIF. The Extracellular segment spans residues 441-447; it reads SLSPTDG. The chain crosses the membrane as a helical span at residues 448–468; the sequence is ICGARVWLLSIGYTIFLGSLL. Residues 469–494 lie on the Cytoplasmic side of the membrane; the sequence is VKNWRIWLLFDNPKLKKRSITNWKLY. Residues 495-515 traverse the membrane as a helical segment; that stretch reads PFVAGILAADVLILALWQGLG. Residues 516–545 lie on the Extracellular side of the membrane; sequence DIRSESRIGIDSLTKYQYANVCSSNDQGSV. Residues 546–566 form a helical membrane-spanning segment; sequence ALYILLVFHGIKLLAACFISF. Residues 567 to 580 lie on the Cytoplasmic side of the membrane; the sequence is KIKAVDIEEFNESK. Residues 581–601 traverse the membrane as a helical segment; the sequence is PIASSIYIITFCLFIVIPLMV. Residues 602 to 609 are Extracellular-facing; the sequence is SPQSVASQ. The chain crosses the membrane as a helical span at residues 610–630; sequence VITIVVCAIVTTLISISLLFG. Topologically, residues 631–798 are cytoplasmic; sequence SKFYMMATQG…NQSEIDPDDV (168 aa). A coiled-coil region spans residues 714-771; sequence AEQDSKLDLENQNDENEIENNQNNQNNIVEDCQKVEKLEKDENLEKDENLEKDENLEK. A compositionally biased stretch (basic and acidic residues) spans 752 to 774; it reads EKDENLEKDENLEKDENLEKDNE. Positions 752–798 are disordered; sequence EKDENLEKDENLEKDENLEKDNENQSIIQKKRLSKNFNQSEIDPDDV.

The protein in the N-terminal section; belongs to the BMP lipoprotein family. In the C-terminal section; belongs to the G-protein coupled receptor 3 family. GABA-B receptor subfamily.

It is found in the membrane. The protein localises to the cytoplasm. The protein resides in the cell cortex. Its subcellular location is the perinuclear region. In terms of biological role, may play an important role in the terminal differentiation. This chain is Metabotropic glutamate receptor-like protein A (grlA), found in Dictyostelium discoideum (Social amoeba).